The sequence spans 165 residues: Copper-resistant cuproprotein CopI (165 aa).

The first 23 residues, 1 to 23 (MKNRILRPALLCVAALFATTAQA), serve as a signal peptide directing secretion. Residues 25 to 42 (AGHDHGSAHAGAHAHDAD) show a composition bias toward basic and acidic residues. Positions 25–50 (AGHDHGSAHAGAHAHDADTPYGRPGD) are disordered. Residues His93, Cys148, His153, and Met158 each coordinate Cu(2+).

The protein belongs to the CopI family. As to quaternary structure, monomer.

Its subcellular location is the periplasm. Its function is as follows. Involved in copper tolerance. Required for copper resistance under both aerobic and anaerobic photosynthetic growth conditions. Binds copper. Could be an important defense against copper in the periplasm and may protect not only c type cytochromes but also other proteins with cysteine residues from copper ions that may catalyze nonnative disulfide bond formation. The protein is Copper-resistant cuproprotein CopI of Rubrivivax gelatinosus (Rhodocyclus gelatinosus).